The following is a 209-amino-acid chain: Nucleoside triphosphate pyrophosphatase (209 aa).

Catalysis depends on aspartate 79, which acts as the Proton acceptor.

Belongs to the Maf family. The cofactor is a divalent metal cation.

The protein localises to the cytoplasm. It carries out the reaction a ribonucleoside 5'-triphosphate + H2O = a ribonucleoside 5'-phosphate + diphosphate + H(+). The enzyme catalyses a 2'-deoxyribonucleoside 5'-triphosphate + H2O = a 2'-deoxyribonucleoside 5'-phosphate + diphosphate + H(+). Its function is as follows. Nucleoside triphosphate pyrophosphatase. May have a dual role in cell division arrest and in preventing the incorporation of modified nucleotides into cellular nucleic acids. The sequence is that of Nucleoside triphosphate pyrophosphatase from Mycolicibacterium gilvum (strain PYR-GCK) (Mycobacterium gilvum (strain PYR-GCK)).